A 175-amino-acid chain; its full sequence is NADH-ubiquinone oxidoreductase chain 6 (175 aa).

The next 5 membrane-spanning stretches (helical) occupy residues 1 to 21 (MMTYIAFILSTILVVSFVGFS), 25 to 45 (SPIYGGLGLIVSGGVGCGIVL), 48 to 68 (GGSFLGLMVFLIYLGGMLVVF), 88 to 108 (TVLSLFVLGFMAELLFAGYCI), and 149 to 169 (YGTWLVIVTGWSLVIGVLVVM).

It belongs to the complex I subunit 6 family. As to quaternary structure, core subunit of respiratory chain NADH dehydrogenase (Complex I) which is composed of 45 different subunits.

Its subcellular location is the mitochondrion inner membrane. It carries out the reaction a ubiquinone + NADH + 5 H(+)(in) = a ubiquinol + NAD(+) + 4 H(+)(out). Its function is as follows. Core subunit of the mitochondrial membrane respiratory chain NADH dehydrogenase (Complex I) which catalyzes electron transfer from NADH through the respiratory chain, using ubiquinone as an electron acceptor. Essential for the catalytic activity and assembly of complex I. This chain is NADH-ubiquinone oxidoreductase chain 6 (MT-ND6), found in Urotrichus talpoides (Japanese shrew mole).